A 108-amino-acid chain; its full sequence is uncharacterized protein (108 aa).

This is an uncharacterized protein from Pasteurella multocida (strain Pm70).